Consider the following 125-residue polypeptide: MPTKNQLIRHGREEKQRTDRTRASDQCPQKQGVCLRVSTRTPKKPNSALRKIAKVRLSNRHDIFAHIPGEGHNSQEHSIVLVRGGRVKDSPGVKSHRIRGVKDLLGIPDRRKGRSKYGAERPKSK.

Disordered regions lie at residues Met-1 to Gln-29 and Leu-105 to Lys-125. The segment covering His-10–Ala-23 has biased composition (basic and acidic residues).

The protein belongs to the universal ribosomal protein uS12 family.

The protein resides in the mitochondrion. In terms of biological role, protein S12 is involved in the translation initiation step. This Oryza sativa subsp. japonica (Rice) protein is Small ribosomal subunit protein uS12m (RPS12).